The chain runs to 498 residues: ATP synthase subunit beta, chloroplastic (498 aa).

T6 carries the post-translational modification Phosphothreonine. Phosphoserine is present on S13. ATP is bound at residue 172–179 (GGAGVGKT).

The protein belongs to the ATPase alpha/beta chains family. F-type ATPases have 2 components, CF(1) - the catalytic core - and CF(0) - the membrane proton channel. CF(1) has five subunits: alpha(3), beta(3), gamma(1), delta(1), epsilon(1). CF(0) has four main subunits: a(1), b(1), b'(1) and c(9-12).

It is found in the plastid. It localises to the chloroplast thylakoid membrane. The enzyme catalyses ATP + H2O + 4 H(+)(in) = ADP + phosphate + 5 H(+)(out). Its function is as follows. Produces ATP from ADP in the presence of a proton gradient across the membrane. The catalytic sites are hosted primarily by the beta subunits. The protein is ATP synthase subunit beta, chloroplastic of Arabis hirsuta (Hairy rock-cress).